A 262-amino-acid polypeptide reads, in one-letter code: ATP synthase subunit a (262 aa).

The next 7 membrane-spanning stretches (helical) occupy residues 30-50 (ITSL…LTIF), 64-84 (WNIV…DQIG), 91-111 (LIYF…NILG), 123-143 (ISVT…IGFS), 149-169 (FFSL…LVLI), 195-215 (LFGV…SLLL), and 220-240 (ITLP…VALL).

It belongs to the ATPase A chain family. In terms of assembly, F-type ATPases have 2 components, CF(1) - the catalytic core - and CF(0) - the membrane proton channel. CF(1) has five subunits: alpha(3), beta(3), gamma(1), delta(1), epsilon(1). CF(0) has three main subunits: a, b and c.

The protein localises to the mitochondrion inner membrane. In terms of biological role, mitochondrial membrane ATP synthase (F(1)F(0) ATP synthase or Complex V) produces ATP from ADP in the presence of a proton gradient across the membrane which is generated by electron transport complexes of the respiratory chain. F-type ATPases consist of two structural domains, F(1) - containing the extramembraneous catalytic core and F(0) - containing the membrane proton channel, linked together by a central stalk and a peripheral stalk. During catalysis, ATP synthesis in the catalytic domain of F(1) is coupled via a rotary mechanism of the central stalk subunits to proton translocation. Key component of the proton channel; it may play a direct role in the translocation of protons across the membrane. This chain is ATP synthase subunit a (ATP6), found in Allomyces macrogynus.